A 292-amino-acid polypeptide reads, in one-letter code: 4-hydroxy-tetrahydrodipicolinate synthase (292 aa).

T45 lines the pyruvate pocket. Y133 functions as the Proton donor/acceptor in the catalytic mechanism. Residue K161 is the Schiff-base intermediate with substrate of the active site. Pyruvate is bound at residue I203.

Belongs to the DapA family. As to quaternary structure, homodimer.

It localises to the cytoplasm. It carries out the reaction L-aspartate 4-semialdehyde + pyruvate = (2S,4S)-4-hydroxy-2,3,4,5-tetrahydrodipicolinate + H2O + H(+). It participates in amino-acid biosynthesis; L-lysine biosynthesis via DAP pathway; (S)-tetrahydrodipicolinate from L-aspartate: step 3/4. Catalyzes the condensation of (S)-aspartate-beta-semialdehyde [(S)-ASA] and pyruvate to 4-hydroxy-tetrahydrodipicolinate (HTPA). This Pseudomonas savastanoi pv. phaseolicola (strain 1448A / Race 6) (Pseudomonas syringae pv. phaseolicola (strain 1448A / Race 6)) protein is 4-hydroxy-tetrahydrodipicolinate synthase.